Consider the following 236-residue polypeptide: Flagellar L-ring protein (236 aa).

Positions 1 to 16 (MRMQLTAVLAASLLAG) are cleaved as a signal peptide. Cysteine 17 carries N-palmitoyl cysteine lipidation. Residue cysteine 17 is the site of S-diacylglycerol cysteine attachment.

The protein belongs to the FlgH family. As to quaternary structure, the basal body constitutes a major portion of the flagellar organelle and consists of four rings (L,P,S, and M) mounted on a central rod.

It is found in the cell outer membrane. The protein localises to the bacterial flagellum basal body. Assembles around the rod to form the L-ring and probably protects the motor/basal body from shearing forces during rotation. This Sinorhizobium fredii (strain NBRC 101917 / NGR234) protein is Flagellar L-ring protein.